Here is a 447-residue protein sequence, read N- to C-terminus: Blue-light photoreceptor PHR2 (447 aa).

The span at 1–14 (MDSSNVEENLNPET) shows a compositional bias: polar residues. Residues 1-20 (MDSSNVEENLNPETKSAEEQ) form a disordered region. The 135-residue stretch at 115–249 (RAAVVWFRND…EVKYFWGSTL (135 aa)) folds into the Photolyase/cryptochrome alpha/beta domain.

Belongs to the DNA photolyase class-1 family. Requires FAD as cofactor.

The protein is Blue-light photoreceptor PHR2 (PHR2) of Arabidopsis thaliana (Mouse-ear cress).